Consider the following 355-residue polypeptide: N5-carboxyaminoimidazole ribonucleotide synthase (355 aa).

ATP contacts are provided by residues Arg80, Lys120, 125 to 131 (GYDGRGQ), 153 to 156 (EQGI), Glu161, His184, and 237 to 238 (NE). Residues 84–267 (KQLFDKLHLP…QFELHLRAIT (184 aa)) form the ATP-grasp domain.

Belongs to the PurK/PurT family. As to quaternary structure, homodimer.

The catalysed reaction is 5-amino-1-(5-phospho-beta-D-ribosyl)imidazole + hydrogencarbonate + ATP = 5-carboxyamino-1-(5-phospho-D-ribosyl)imidazole + ADP + phosphate + 2 H(+). It functions in the pathway purine metabolism; IMP biosynthesis via de novo pathway; 5-amino-1-(5-phospho-D-ribosyl)imidazole-4-carboxylate from 5-amino-1-(5-phospho-D-ribosyl)imidazole (N5-CAIR route): step 1/2. Catalyzes the ATP-dependent conversion of 5-aminoimidazole ribonucleotide (AIR) and HCO(3)(-) to N5-carboxyaminoimidazole ribonucleotide (N5-CAIR). This is N5-carboxyaminoimidazole ribonucleotide synthase from Escherichia coli (strain K12).